Reading from the N-terminus, the 72-residue chain is Hypertrehalosaemic prohormone (72 aa).

The N-terminal stretch at 1–21 is a signal peptide; the sequence is MNHLVKVLIVVVAIALVLCEA. Gln-22 is subject to Pyrrolidone carboxylic acid. Residue Thr-31 is modified to Threonine amide.

It belongs to the AKH/HRTH/RPCH family. As to expression, expressed in corpora cardiaca.

The protein localises to the secreted. Its function is as follows. Hypertrehalosaemic factors are neuropeptides that elevate the level of trehalose in the hemolymph (trehalose is the major carbohydrate in the hemolymph of insects). In Blaberus discoidalis (Tropical cockroach), this protein is Hypertrehalosaemic prohormone.